The primary structure comprises 402 residues: S-adenosylmethionine synthase (402 aa).

An ATP-binding site is contributed by histidine 15. Mg(2+) is bound at residue aspartate 17. A K(+)-binding site is contributed by glutamate 43. L-methionine is bound by residues glutamate 56 and glutamine 99. Residues 99 to 109 form a flexible loop region; it reads QSPDIAQGVDT. ATP-binding positions include 174 to 176, 247 to 248, aspartate 256, 262 to 263, alanine 279, and lysine 283; these read DGK, RF, and RK. Aspartate 256 is an L-methionine binding site. Residue lysine 287 coordinates L-methionine.

It belongs to the AdoMet synthase family. In terms of assembly, homotetramer; dimer of dimers. The cofactor is Mg(2+). Requires K(+) as cofactor.

It is found in the cytoplasm. It catalyses the reaction L-methionine + ATP + H2O = S-adenosyl-L-methionine + phosphate + diphosphate. It functions in the pathway amino-acid biosynthesis; S-adenosyl-L-methionine biosynthesis; S-adenosyl-L-methionine from L-methionine: step 1/1. Its function is as follows. Catalyzes the formation of S-adenosylmethionine (AdoMet) from methionine and ATP. The overall synthetic reaction is composed of two sequential steps, AdoMet formation and the subsequent tripolyphosphate hydrolysis which occurs prior to release of AdoMet from the enzyme. The polypeptide is S-adenosylmethionine synthase (Streptomyces griseus subsp. griseus (strain JCM 4626 / CBS 651.72 / NBRC 13350 / KCC S-0626 / ISP 5235)).